Reading from the N-terminus, the 342-residue chain is Holliday junction branch migration complex subunit RuvB (342 aa).

Residues 2-181 (TDNPLLSSAS…FGIPVRLQFY (180 aa)) form a large ATPase domain (RuvB-L) region. 9 residues coordinate ATP: Leu20, Arg21, Gly62, Lys65, Thr66, Thr67, Arg171, Tyr181, and Arg218. Thr66 is a Mg(2+) binding site. Positions 182–252 (SVEELERVVA…IADNALTRLE (71 aa)) are small ATPAse domain (RuvB-S). Residues 255-342 (KIGLDLQDRR…QMPGLFGPDE (88 aa)) are head domain (RuvB-H). DNA contacts are provided by Arg291, Arg310, and Arg315.

This sequence belongs to the RuvB family. In terms of assembly, homohexamer. Forms an RuvA(8)-RuvB(12)-Holliday junction (HJ) complex. HJ DNA is sandwiched between 2 RuvA tetramers; dsDNA enters through RuvA and exits via RuvB. An RuvB hexamer assembles on each DNA strand where it exits the tetramer. Each RuvB hexamer is contacted by two RuvA subunits (via domain III) on 2 adjacent RuvB subunits; this complex drives branch migration. In the full resolvosome a probable DNA-RuvA(4)-RuvB(12)-RuvC(2) complex forms which resolves the HJ.

It is found in the cytoplasm. The enzyme catalyses ATP + H2O = ADP + phosphate + H(+). Its function is as follows. The RuvA-RuvB-RuvC complex processes Holliday junction (HJ) DNA during genetic recombination and DNA repair, while the RuvA-RuvB complex plays an important role in the rescue of blocked DNA replication forks via replication fork reversal (RFR). RuvA specifically binds to HJ cruciform DNA, conferring on it an open structure. The RuvB hexamer acts as an ATP-dependent pump, pulling dsDNA into and through the RuvAB complex. RuvB forms 2 homohexamers on either side of HJ DNA bound by 1 or 2 RuvA tetramers; 4 subunits per hexamer contact DNA at a time. Coordinated motions by a converter formed by DNA-disengaged RuvB subunits stimulates ATP hydrolysis and nucleotide exchange. Immobilization of the converter enables RuvB to convert the ATP-contained energy into a lever motion, pulling 2 nucleotides of DNA out of the RuvA tetramer per ATP hydrolyzed, thus driving DNA branch migration. The RuvB motors rotate together with the DNA substrate, which together with the progressing nucleotide cycle form the mechanistic basis for DNA recombination by continuous HJ branch migration. Branch migration allows RuvC to scan DNA until it finds its consensus sequence, where it cleaves and resolves cruciform DNA. The polypeptide is Holliday junction branch migration complex subunit RuvB (Novosphingobium aromaticivorans (strain ATCC 700278 / DSM 12444 / CCUG 56034 / CIP 105152 / NBRC 16084 / F199)).